The sequence spans 426 residues: Serine/threonine-protein kinase ssn3 (426 aa).

Residues 39–368 form the Protein kinase domain; it reads YHIVGFISSG…AKEALEHPYF (330 aa). Residues 45 to 53 and K69 contribute to the ATP site; that span reads ISSGTYGRV. D171 acts as the Proton acceptor in catalysis. The span at 389–398 shows a compositional bias: basic and acidic residues; sequence RRITHDDNDI. The segment at 389-426 is disordered; it reads RRITHDDNDIRSGSLPGTKRSGLPDDSLMSRAAKRMKE.

It belongs to the protein kinase superfamily. CMGC Ser/Thr protein kinase family. CDC2/CDKX subfamily. In terms of assembly, component of the srb8-11 complex, a regulatory module of the Mediator complex. Requires Mg(2+) as cofactor.

It localises to the nucleus. The enzyme catalyses L-seryl-[protein] + ATP = O-phospho-L-seryl-[protein] + ADP + H(+). The catalysed reaction is L-threonyl-[protein] + ATP = O-phospho-L-threonyl-[protein] + ADP + H(+). It catalyses the reaction [DNA-directed RNA polymerase] + ATP = phospho-[DNA-directed RNA polymerase] + ADP + H(+). Its function is as follows. Component of the srb8-11 complex. The srb8-11 complex is a regulatory module of the Mediator complex which is itself involved in regulation of basal and activated RNA polymerase II-dependent transcription. The srb8-11 complex may be involved in the transcriptional repression of a subset of genes regulated by Mediator. It may inhibit the association of the Mediator complex with RNA polymerase II to form the holoenzyme complex. The srb8-11 complex phosphorylates the C-terminal domain (CTD) of the largest subunit of RNA polymerase II. This chain is Serine/threonine-protein kinase ssn3 (ssn3), found in Emericella nidulans (strain FGSC A4 / ATCC 38163 / CBS 112.46 / NRRL 194 / M139) (Aspergillus nidulans).